We begin with the raw amino-acid sequence, 603 residues long: Phosphogluconate dehydratase (603 aa).

[4Fe-4S] cluster-binding residues include cysteine 154 and cysteine 221.

This sequence belongs to the IlvD/Edd family. [4Fe-4S] cluster serves as cofactor.

It carries out the reaction 6-phospho-D-gluconate = 2-dehydro-3-deoxy-6-phospho-D-gluconate + H2O. The protein operates within carbohydrate metabolism; Entner-Doudoroff pathway. Functionally, catalyzes the dehydration of 6-phospho-D-gluconate to 2-dehydro-3-deoxy-6-phospho-D-gluconate. In Escherichia coli O157:H7, this protein is Phosphogluconate dehydratase.